Reading from the N-terminus, the 256-residue chain is Pimeloyl-[acyl-carrier protein] methyl ester esterase (256 aa).

The AB hydrolase-1 domain occupies 15–242; sequence HLVLLHGWGL…AAHAPFISHP (228 aa). Substrate is bound by residues tryptophan 22, 82 to 83, and 143 to 147; these read SL and FLALQ. Catalysis depends on serine 82, which acts as the Nucleophile. Active-site residues include aspartate 207 and histidine 235. Residue histidine 235 participates in substrate binding.

It belongs to the AB hydrolase superfamily. Carboxylesterase BioH family. As to quaternary structure, monomer.

It is found in the cytoplasm. It carries out the reaction 6-carboxyhexanoyl-[ACP] methyl ester + H2O = 6-carboxyhexanoyl-[ACP] + methanol + H(+). Its pathway is cofactor biosynthesis; biotin biosynthesis. Its function is as follows. The physiological role of BioH is to remove the methyl group introduced by BioC when the pimeloyl moiety is complete. It allows to synthesize pimeloyl-ACP via the fatty acid synthetic pathway through the hydrolysis of the ester bonds of pimeloyl-ACP esters. In Escherichia coli O7:K1 (strain IAI39 / ExPEC), this protein is Pimeloyl-[acyl-carrier protein] methyl ester esterase.